We begin with the raw amino-acid sequence, 343 residues long: Anthranilate phosphoribosyltransferase (343 aa).

5-phospho-alpha-D-ribose 1-diphosphate is bound by residues G86, 89-90 (GD), T94, 96-99 (NIST), 114-122 (KHGNRSASG), and S126. Anthranilate is bound at residue G86. A Mg(2+)-binding site is contributed by S98. N117 contributes to the anthranilate binding site. An anthranilate-binding site is contributed by R172. Positions 231 and 232 each coordinate Mg(2+).

It belongs to the anthranilate phosphoribosyltransferase family. In terms of assembly, homodimer. Mg(2+) serves as cofactor.

It carries out the reaction N-(5-phospho-beta-D-ribosyl)anthranilate + diphosphate = 5-phospho-alpha-D-ribose 1-diphosphate + anthranilate. Its pathway is amino-acid biosynthesis; L-tryptophan biosynthesis; L-tryptophan from chorismate: step 2/5. Catalyzes the transfer of the phosphoribosyl group of 5-phosphorylribose-1-pyrophosphate (PRPP) to anthranilate to yield N-(5'-phosphoribosyl)-anthranilate (PRA). This Synechococcus sp. (strain JA-2-3B'a(2-13)) (Cyanobacteria bacterium Yellowstone B-Prime) protein is Anthranilate phosphoribosyltransferase.